We begin with the raw amino-acid sequence, 486 residues long: Lipase 1 (486 aa).

An intrachain disulfide couples cysteine 58 to cysteine 82. Catalysis depends on serine 193, which acts as the Acyl-ester intermediate. Aspartate 303 acts as the Charge relay system in catalysis. A glycan (N-linked (GlcNAc...) asparagine) is linked at asparagine 332. Histidine 392 acts as the Charge relay system in catalysis.

The protein belongs to the type-B carboxylesterase/lipase family.

The enzyme catalyses a triacylglycerol + H2O = a diacylglycerol + a fatty acid + H(+). The protein is Lipase 1 (LIP1) of Yarrowia lipolytica (strain CLIB 122 / E 150) (Yeast).